A 415-amino-acid polypeptide reads, in one-letter code: MIDLKLLQKDFQTISNKLSRKGVDADLLENLKIRNEELKVAKVAYETLQAAQNSMSKDFGIYKKEGRDTTELKAKVDENKIKIAEALDTQRIKQEALEYLAMSIPNIPDDDVPDGKDENDNVEIKKVLTPKEFSFTPKEHWELAGQNGWIDFERGVKLATSRFSVSFGMGAKLERALINFMLNFNSKRGFEEVSVPSLVNRAALEGTGQLPKFEDDLYKIQGQELFLIPTAEVPVTNLYQDEILHVERLPIKMTAYTSCFRKEAGAAGRDTRGMIRQHQFHKVELVSITKPQQSDEIFDEMVQTASDLLSALELPHRLVRLCGGDLGFGAAKTVDLEVWLPGQNAYREISSVSNTREFQARRAKIRFKDGDKNSFVHTLNGSSLAVGRTLVAIMENFQNEDGSITIPKVLSPYLN.

Residue 230–232 participates in L-serine binding; that stretch reads TAE. 261-263 contributes to the ATP binding site; sequence RKE. Glu-284 is a binding site for L-serine. Position 348–351 (348–351) interacts with ATP; that stretch reads EISS. Position 382 (Ser-382) interacts with L-serine.

This sequence belongs to the class-II aminoacyl-tRNA synthetase family. Type-1 seryl-tRNA synthetase subfamily. As to quaternary structure, homodimer. The tRNA molecule binds across the dimer.

It localises to the cytoplasm. It carries out the reaction tRNA(Ser) + L-serine + ATP = L-seryl-tRNA(Ser) + AMP + diphosphate + H(+). The enzyme catalyses tRNA(Sec) + L-serine + ATP = L-seryl-tRNA(Sec) + AMP + diphosphate + H(+). It functions in the pathway aminoacyl-tRNA biosynthesis; selenocysteinyl-tRNA(Sec) biosynthesis; L-seryl-tRNA(Sec) from L-serine and tRNA(Sec): step 1/1. Functionally, catalyzes the attachment of serine to tRNA(Ser). Is also able to aminoacylate tRNA(Sec) with serine, to form the misacylated tRNA L-seryl-tRNA(Sec), which will be further converted into selenocysteinyl-tRNA(Sec). The sequence is that of Serine--tRNA ligase from Sulfurimonas denitrificans (strain ATCC 33889 / DSM 1251) (Thiomicrospira denitrificans (strain ATCC 33889 / DSM 1251)).